A 717-amino-acid chain; its full sequence is Transport/processing ATP-binding protein ComA (717 aa).

In terms of domain architecture, Peptidase C39 spans 11 to 138 (QVDQMDCGVA…EEWTGVTLFM (128 aa)). Cysteine 17 is a catalytic residue. 6 helical membrane passes run 166-186 (GLIANIVLATLLVTVINIVGS), 205-225 (LGIISIGLVIVYIFQQILSYA), 237-257 (LSIDVILSYIKHVFHLPMSFF), 282-302 (TILSIFLDVSTVVIISLVLFS), 306-326 (NLFFMTLLALPIYTVIIFAFM), and 397-417 (VAHLLLNVGILWMGAVLVMDG). One can recognise an ABC transmembrane type-1 domain in the interval 168 to 450 (IANIVLATLL…IINLQTKLQT (283 aa)). Positions 484–717 (MTFKQVHYKY…GGFYAHLVNS (234 aa)) constitute an ABC transporter domain. 517 to 524 (GISGSGKT) is a binding site for ATP.

It belongs to the ABC transporter superfamily. Competence factor exporter (TC 3.A.1.112.1) family.

It localises to the cell membrane. Its function is as follows. Required for induction of competence. Seems to transport the competence-stimulating peptide (CSP). This Streptococcus pneumoniae serotype 4 (strain ATCC BAA-334 / TIGR4) protein is Transport/processing ATP-binding protein ComA (comA).